We begin with the raw amino-acid sequence, 317 residues long: Adenosine receptor A3 (317 aa).

Residues 1-14 (MPVNSTAVSLASVT) are Extracellular-facing. Asn4 carries N-linked (GlcNAc...) asparagine glycosylation. A helical membrane pass occupies residues 15 to 37 (YISVEILIGLCAIVGNVLVIWVV). Topologically, residues 38–48 (KLNPSLQTTTF) are cytoplasmic. A helical membrane pass occupies residues 49-72 (YFIVSLALADIAVGVLVMPLAIVI). Over 73-84 (SLGVTIHFYSCL) the chain is Extracellular. A disulfide bond links Cys83 and Cys165. Residues 85 to 106 (LMTCLLMIFTHASIMSLLAIAV) form a helical membrane-spanning segment. Residues 107–126 (DRYLRVKLTVRYRRVTTQRR) lie on the Cytoplasmic side of the membrane. The helical transmembrane segment at 127–148 (IWLALGLCWLVSFLVGLTPMFG) threads the bilayer. Topologically, residues 149 to 176 (WNMKLSSADKNLTFLPCQFRSVMRMDYM) are extracellular. Residues 177-197 (VYFSFFTWILIPLVVMCAIYF) traverse the membrane as a helical segment. Residues 198 to 230 (DIFYVIRNRLSQNFSGSKETGAFYGREFKTAKS) are Cytoplasmic-facing. A helical membrane pass occupies residues 231-254 (LSLVLFLFALSWLPLSIINCIIYF). The Extracellular portion of the chain corresponds to 255 to 260 (NGEVPQ). A helical transmembrane segment spans residues 261–283 (IVLYLGILLSHANSMMNPIVYAY). Residues 284 to 317 (KIKKFKETYLLILKACVICQPSKSMDPSIEQTSE) lie on the Cytoplasmic side of the membrane. Residue Cys302 is the site of S-palmitoyl cysteine attachment.

It belongs to the G-protein coupled receptor 1 family. Phosphorylation on Thr-315 and Ser-316 may be crucial for rapid desensitization. Phosphorylation on Thr-315 may be necessary for phosphorylation on Ser-316 to occur.

It is found in the cell membrane. Receptor for adenosine. The activity of this receptor is mediated by G proteins which inhibits adenylyl cyclase. In Bos taurus (Bovine), this protein is Adenosine receptor A3 (ADORA3).